A 385-amino-acid chain; its full sequence is Regulatory protein E2 (385 aa).

Residues 1–199 are transactivation domain; sequence MEKLSEALDL…QPTTIPTTSA (199 aa). Over residues 189-201 the composition is skewed to polar residues; sequence NQPTTIPTTSAAG. The segment at 189 to 282 is disordered; sequence NQPTTIPTTS…VGSKHQLRTT (94 aa). Positions 225-247 are enriched in basic residues; that stretch reads GPSRRPGRRSSRFPRRSGGRGRL. Over residues 261 to 275 the composition is skewed to low complexity; sequence PSSSWSPPSPQQVGS. The DNA-binding domain stretch occupies residues 298 to 385; the sequence is DPPVLVLAGD…RVFRGGLDEL (88 aa).

It belongs to the papillomaviridae E2 protein family. In terms of assembly, binds DNA as homodimer. Interacts with protein E1; this interaction greatly increases E1 DNA-binding activity. Interacts with protein L1; this interaction enhances E2-dependent replication and transcription activation. Interacts with protein L2; this interaction inhibits E2 transcriptional activity but not DNA replication function E2. Interacts with protein E7; this interaction inhibits E7 oncogenic activity. Interacts with host TAF1; this interaction modulates E2-dependent transcriptional regulation. Interacts with host BRD4; this interaction mediates E2 transcriptional activation function. Additionally, the interaction with host BRD4 on mitotic chromosomes mediates tethering of the viral genome. Interacts with host TOPBP1; this interaction is required for optimal viral DNA replication. Post-translationally, phosphorylated.

Its subcellular location is the host nucleus. In terms of biological role, plays a role in the initiation of viral DNA replication. A dimer of E2 interacts with a dimer of E1 in order to improve specificity of E1 DNA binding activity. Once the complex recognizes and binds DNA at specific sites, the E2 dimer is removed from DNA. E2 also regulates viral transcription through binding to the E2RE response element (5'-ACCNNNNNNGGT-3') present in multiple copies in the regulatory regions of the viral genome. Activates or represses transcription depending on E2RE's position with regards to proximal promoter elements including the TATA-box. Repression occurs by sterically hindering the assembly of the transcription initiation complex. The sequence is that of Regulatory protein E2 from Canis lupus familiaris (Dog).